Consider the following 1287-residue polypeptide: Cell adhesion molecule-related/down-regulated by oncogenes (1287 aa).

The N-terminal stretch at Met-1 to Ser-25 is a signal peptide. The Extracellular portion of the chain corresponds to Asp-26–Asp-963. 5 consecutive Ig-like C2-type domains span residues Pro-29 to Ser-114, Asp-120 to Glu-204, Pro-225 to Thr-303, Glu-310 to Glu-396, and Pro-405 to Met-516. Residues Cys-50 and Cys-97 are joined by a disulfide bond. N-linked (GlcNAc...) asparagine glycosylation is found at Asn-88, Asn-100, Asn-180, Asn-287, Asn-294, Asn-342, and Asn-427. 2 cysteine pairs are disulfide-bonded: Cys-141-Cys-191 and Cys-243-Cys-290. 2 disulfide bridges follow: Cys-333-Cys-380 and Cys-426-Cys-500. The interval Leu-531 to Ser-553 is disordered. Over residues Asn-537 to Ser-546 the composition is skewed to basic and acidic residues. N-linked (GlcNAc...) asparagine glycosylation is present at Asn-570. 3 Fibronectin type-III domains span residues Ala-579–Lys-677, Ala-723–Arg-821, and Pro-826–Lys-926. Asn-873 carries N-linked (GlcNAc...) asparagine glycosylation. Residues Glu-933–Ala-955 form a disordered region. Residues Met-964–Ile-984 traverse the membrane as a helical segment. The Cytoplasmic portion of the chain corresponds to Ala-985–Thr-1287. Residues Ser-1268–Thr-1287 form a disordered region.

As to quaternary structure, part of a complex that contains BOC, CDON, NEO1, cadherins and CTNNB1. Interacts with NTN3. Interacts with PTCH1. Interacts with GAS1. Interacts with DHH, IHH and SHH. In terms of processing, N-glycosylated.

Its subcellular location is the cell membrane. Its function is as follows. Component of a cell-surface receptor complex that mediates cell-cell interactions between muscle precursor cells. Promotes differentiation of myogenic cells. The sequence is that of Cell adhesion molecule-related/down-regulated by oncogenes (CDON) from Homo sapiens (Human).